The sequence spans 362 residues: Ferrochelatase (362 aa).

Fe cation-binding residues include histidine 212 and glutamate 294.

Belongs to the ferrochelatase family.

It localises to the cytoplasm. The enzyme catalyses heme b + 2 H(+) = protoporphyrin IX + Fe(2+). It participates in porphyrin-containing compound metabolism; protoheme biosynthesis; protoheme from protoporphyrin-IX: step 1/1. Its function is as follows. Catalyzes the ferrous insertion into protoporphyrin IX. This is Ferrochelatase from Leptospira biflexa serovar Patoc (strain Patoc 1 / Ames).